We begin with the raw amino-acid sequence, 178 residues long: Fatty-acid and retinol-binding protein 1 (178 aa).

The first 16 residues, 1–16, serve as a signal peptide directing secretion; it reads MYHQLILMALIGVIMA. N-linked (GlcNAc...) asparagine glycosylation is found at asparagine 44 and asparagine 75. 2 coiled-coil regions span residues 67–89 and 123–153; these read DAAL…ELRN and KLDV…ELKA. Asparagine 157 carries an N-linked (GlcNAc...) asparagine glycan.

The protein belongs to the fatty-acid and retinol-binding protein (FARBP) family. N-glycosylated.

Its subcellular location is the secreted. Functionally, binds retinol and different fatty acids. The polypeptide is Fatty-acid and retinol-binding protein 1 (Acanthocheilonema viteae (Filarial nematode worm)).